Here is a 235-residue protein sequence, read N- to C-terminus: MSTESMIRDVELAEGPLPKKAGGPQGSKRCLCLSLFSFLLVAGATTLFCLLHFRVIGPQEEEQSPNNLHLVNPVAQMVTLRSASRALSDKPLAHVVANPQVEGQLQWLSQRANALLANGMKLTDNQLVVPADGLYLIYSQVLFSGQGCRSYVLLTHTVSRFAVSYPNKVNLLSAIKSPCHRETPEEAEPMAWYEPIYLGGVFQLEKGDRLSTEVNQPEYLDLAESGQVYFGIIAL.

The Cytoplasmic portion of the chain corresponds to 1–35 (MSTESMIRDVELAEGPLPKKAGGPQGSKRCLCLSL). S2 is modified (phosphoserine; by CK1). N6-myristoyl lysine attachment occurs at residues K19 and K20. Residues 36–56 (FSFLLVAGATTLFCLLHFRVI) traverse the membrane as a helical; Signal-anchor for type II membrane protein segment. Residues 57–235 (GPQEEEQSPN…GQVYFGIIAL (179 aa)) lie on the Extracellular side of the membrane. A THD domain is found at 91 to 235 (PLAHVVANPQ…GQVYFGIIAL (145 aa)). C148 and C179 are disulfide-bonded.

It belongs to the tumor necrosis factor family. In terms of assembly, homotrimer. Interacts with SPPL2B. The soluble form derives from the membrane form by proteolytic processing. The membrane-bound form is further proteolytically processed by SPPL2A or SPPL2B through regulated intramembrane proteolysis producing TNF intracellular domains (ICD1 and ICD2) released in the cytosol and TNF C-domain 1 and C-domain 2 secreted into the extracellular space. Post-translationally, the membrane form, but not the soluble form, is phosphorylated on serine residues. Dephosphorylation of the membrane form occurs by binding to soluble TNFRSF1A/TNFR1. In terms of processing, O-glycosylated; glycans contain galactose, N-acetylgalactosamine and N-acetylneuraminic acid. The soluble form is demyristoylated by SIRT6, promoting its secretion.

It localises to the cell membrane. The protein localises to the membrane. Its subcellular location is the secreted. Functionally, cytokine that binds to TNFRSF1A/TNFR1 and TNFRSF1B/TNFBR. It is mainly secreted by macrophages and can induce cell death of certain tumor cell lines. It is potent pyrogen causing fever by direct action or by stimulation of interleukin-1 secretion and is implicated in the induction of cachexia, Under certain conditions it can stimulate cell proliferation and induce cell differentiation. Induces insulin resistance in adipocytes via inhibition of insulin-induced IRS1 tyrosine phosphorylation and insulin-induced glucose uptake. Induces GKAP42 protein degradation in adipocytes which is partially responsible for TNF-induced insulin resistance. Plays a role in angiogenesis by inducing VEGF production synergistically with IL1B and IL6. Promotes osteoclastogenesis and therefore mediates bone resorption. Its function is as follows. The TNF intracellular domain (ICD) form induces IL12 production in dendritic cells. The sequence is that of Tumor necrosis factor (TNF) from Oryctolagus cuniculus (Rabbit).